The following is a 209-amino-acid chain: dTTP/UTP pyrophosphatase (209 aa).

D79 (proton acceptor) is an active-site residue.

The protein belongs to the Maf family. YhdE subfamily. Requires a divalent metal cation as cofactor.

It localises to the cytoplasm. The catalysed reaction is dTTP + H2O = dTMP + diphosphate + H(+). It carries out the reaction UTP + H2O = UMP + diphosphate + H(+). Functionally, nucleoside triphosphate pyrophosphatase that hydrolyzes dTTP and UTP. May have a dual role in cell division arrest and in preventing the incorporation of modified nucleotides into cellular nucleic acids. This Bradyrhizobium diazoefficiens (strain JCM 10833 / BCRC 13528 / IAM 13628 / NBRC 14792 / USDA 110) protein is dTTP/UTP pyrophosphatase.